The chain runs to 350 residues: Anthranilate phosphoribosyltransferase (350 aa).

Residues Gly93, 96-97 (GD), Thr101, 103-106 (NIST), 121-129 (KHGNRSASG), and Ser133 contribute to the 5-phospho-alpha-D-ribose 1-diphosphate site. Gly93 lines the anthranilate pocket. Mg(2+) is bound at residue Ser105. Residue Asn124 coordinates anthranilate. Arg179 contacts anthranilate. Positions 238 and 239 each coordinate Mg(2+).

This sequence belongs to the anthranilate phosphoribosyltransferase family. In terms of assembly, homodimer. The cofactor is Mg(2+).

It catalyses the reaction N-(5-phospho-beta-D-ribosyl)anthranilate + diphosphate = 5-phospho-alpha-D-ribose 1-diphosphate + anthranilate. Its pathway is amino-acid biosynthesis; L-tryptophan biosynthesis; L-tryptophan from chorismate: step 2/5. Functionally, catalyzes the transfer of the phosphoribosyl group of 5-phosphorylribose-1-pyrophosphate (PRPP) to anthranilate to yield N-(5'-phosphoribosyl)-anthranilate (PRA). The protein is Anthranilate phosphoribosyltransferase of Parasynechococcus marenigrum (strain WH8102).